The following is a 308-amino-acid chain: Protein translocase subunit SecF (308 aa).

6 helical membrane-spanning segments follow: residues 28-48 (SIIL…NFGI), 140-160 (IEAG…YIWV), 164-184 (WYFG…ALGF), 194-214 (LSTI…SVVI), 246-266 (ILTV…GGEA), and 272-292 (VLVF…SAPI).

The protein belongs to the SecD/SecF family. SecF subfamily. In terms of assembly, forms a complex with SecD. Part of the essential Sec protein translocation apparatus which comprises SecA, SecYEG and auxiliary proteins SecDF-YajC and YidC.

The protein resides in the cell inner membrane. Functionally, part of the Sec protein translocase complex. Interacts with the SecYEG preprotein conducting channel. SecDF uses the proton motive force (PMF) to complete protein translocation after the ATP-dependent function of SecA. This chain is Protein translocase subunit SecF, found in Rickettsia conorii (strain ATCC VR-613 / Malish 7).